The following is a 780-amino-acid chain: MAAPVSEPTVARQKLLALLGQVQTYVFQIELLRRCDPHIGRGNAPPTEAERASGAGAAASSEAGPGGPAGAFLTPLSVTLELLLEYAWREGERLLGSLETFATAGDVAVFFTETMGLARPCPYHQRVRLDTYGGTVHMELCFLHDVENFLKQLNYCHLITPSRGATALERVREFMVGAVGSGLIVPPELSDPSHPCAVCFEELCVTANQGATIAAAWRTVSVTTSPSRRRCGWTPTSVRRYLPHAAGLSDADRAGALRVGPCAGPDRGGRRAAPPVAENDSVRKEADALLEAHDVFQATTPGLYAISELRFWLASGDRAGQTTMDAFASNLTALARELQQETAAVAVELALFGRRAEHFDRAFGSHLAALDMVDALIIGGQATSPDDQIEALIRACYDHHLTTPLLRRLVSPEQCDEEALRRVLARMGAGAGGPKGGAGPDDDGDRVAVEEGARGLGAPGGGGEDEAPSPRARGTGPETWGDIATQAAADVRERRRLYADRLTKRSLASLGRCVREQRGELEKMLRVSVHGEVLPATFAAVANGFAARALLAALTAGAGTVIDNRSAPGVFDAHRFMRASLLRHQVDPALLPSITHRFFELVNGPLFDHSTHSFAQPPNTALYYSVENVGLLPHLKEELARFIMGAGGSGADWAVSEFQRFYCFDGISGITPTQRAAWRYIRELIIATTLFASVYRCGELELRRPDCSRPTSEGRYRYPPGVYLTYDSDCPLVAIVESAPDGCIGPRSVVVYDRDVFSILYSVLQHLAPRLPDGGHDGPP.

Disordered regions lie at residues 41–66 (RGNAPPTEAERASGAGAAASSEAGPG), 428–447 (GAGAGGPKGGAGPDDDGDRV), and 452–483 (GARGLGAPGGGGEDEAPSPRARGTGPETWGDI). Over residues 52 to 63 (ASGAGAAASSEA) the composition is skewed to low complexity. Positions 429–439 (AGAGGPKGGAG) are enriched in gly residues. Residue 691–698 (FASVYRCG) participates in ATP binding.

Belongs to the herpesviridae TRM1 protein family. Associates with TRM2 and TRM3 to form the tripartite terminase complex. Interacts with portal protein.

The protein localises to the host nucleus. Its function is as follows. Component of the molecular motor that translocates viral genomic DNA in empty capsid during DNA packaging. Forms a tripartite terminase complex together with TRM2 and TRM3 in the host cytoplasm. Once the complex reaches the host nucleus, it interacts with the capsid portal vertex. This portal forms a ring in which genomic DNA is translocated into the capsid. TRM1 carries an endonuclease activity that plays an important role for the cleavage of concatemeric viral DNA into unit length genomes. The polypeptide is Tripartite terminase subunit 1 (Homo sapiens (Human)).